The following is a 376-amino-acid chain: Ribonucleoside-diphosphate reductase 1 subunit beta (376 aa).

Residues Asp85, Glu116, and His119 each coordinate Fe cation. The active site involves Tyr123. Fe cation contacts are provided by Glu205, Glu239, and His242.

This sequence belongs to the ribonucleoside diphosphate reductase small chain family. Tetramer of two alpha (R1) and two beta (R2) subunits. The B1 protein is a dimer of alpha subunits. A radical transfer pathway occurs between Tyr-123 of R2 and R1. Fe cation serves as cofactor.

The catalysed reaction is a 2'-deoxyribonucleoside 5'-diphosphate + [thioredoxin]-disulfide + H2O = a ribonucleoside 5'-diphosphate + [thioredoxin]-dithiol. Provides the precursors necessary for DNA synthesis. Catalyzes the biosynthesis of deoxyribonucleotides from the corresponding ribonucleotides. R2 contains the tyrosyl radical required for catalysis. The protein is Ribonucleoside-diphosphate reductase 1 subunit beta (nrdB) of Escherichia coli O157:H7.